The primary structure comprises 468 residues: Immunoglobulin superfamily member 21 (468 aa).

The signal sequence occupies residues 1–24; the sequence is MQAAPSLRRASCLLLAAILDLARG. The 108-residue stretch at 25 to 132 folds into the Ig-like 1 domain; that stretch reads YLTVNIEPLP…RATREKVVLA (108 aa). A disulfide bond links cysteine 46 and cysteine 116. N-linked (GlcNAc...) asparagine glycosylation is found at asparagine 82, asparagine 165, and asparagine 407. The region spanning 344 to 429 is the Ig-like 2 domain; it reads PKIMMTPSRA…GSTDTHTRLI (86 aa).

Interacts (Ig-like 1 domain) with NRXN2 (via Laminin G-like 1 domain) in a trans-interaction manner. In terms of tissue distribution, expressed in brain (at protein levels). Highly expressed in the pyramidal cell layer of the dorsal and ventral hippocampal CA1 and CA3 regions, layers 5 and 6 of the cortex, the thalamus and the pons and weakly expressed in the cerebellum. Expressed in neurons but not in glia.

The protein resides in the postsynaptic cell membrane. Functionally, involved in synaptic inhibition in the brain. Selectively regulates inhibitory presynaptic differentiation through interacting with presynaptic NRXN2. This Mus musculus (Mouse) protein is Immunoglobulin superfamily member 21 (Igsf21).